We begin with the raw amino-acid sequence, 107 residues long: Vasopressin-neurophysin 2 (107 aa).

Cys-1 and Cys-6 form a disulfide bridge. At Gly-9 the chain carries Glycine amide. Disulfide bonds link Cys-22-Cys-66, Cys-25-Cys-39, Cys-33-Cys-56, Cys-40-Cys-46, Cys-73-Cys-85, Cys-79-Cys-97, and Cys-86-Cys-91.

Belongs to the vasopressin/oxytocin family. In terms of assembly, interacts with vasopressin receptors V1bR/AVPR1B (Ki=85 pM), V1aR/AVPR1A (Ki=0.6 nM) and V2R/AVPR2 (Ki=4.9 nM). Interacts with oxytocin receptor (OXTR) (Ki=110 nM).

Its subcellular location is the secreted. Its function is as follows. Neurophysin 2 specifically binds vasopressin. Functionally, vasopressin has a direct antidiuretic action on the kidney, it also causes vasoconstriction of the peripheral vessels. Acts by binding to vasopressin receptors (V1bR/AVPR1B, V1aR/AVPR1A, and V2R/AVPR2). In Balaenoptera physalus (Fin whale), this protein is Vasopressin-neurophysin 2 (AVP).